A 432-amino-acid polypeptide reads, in one-letter code: Enolase (432 aa).

Gln166 lines the (2R)-2-phosphoglycerate pocket. Glu208 acts as the Proton donor in catalysis. Residues Asp245, Glu291, and Asp318 each coordinate Mg(2+). Residues Lys343, Arg372, Ser373, and Lys394 each contribute to the (2R)-2-phosphoglycerate site. The active-site Proton acceptor is Lys343.

This sequence belongs to the enolase family. The cofactor is Mg(2+).

The protein resides in the cytoplasm. The protein localises to the secreted. Its subcellular location is the cell surface. It catalyses the reaction (2R)-2-phosphoglycerate = phosphoenolpyruvate + H2O. It functions in the pathway carbohydrate degradation; glycolysis; pyruvate from D-glyceraldehyde 3-phosphate: step 4/5. Catalyzes the reversible conversion of 2-phosphoglycerate (2-PG) into phosphoenolpyruvate (PEP). It is essential for the degradation of carbohydrates via glycolysis. The sequence is that of Enolase from Leptospira borgpetersenii serovar Hardjo-bovis (strain L550).